A 96-amino-acid chain; its full sequence is MRTLVILAAILLVALQAQAEPLQARTDEATAAQEQIPTDNPEVVVSLAWDESLAPKDSVPGLRKNMACYCRIPACLAGERRYGTCFYLRRVWAFCC.

The signal sequence occupies residues 1–19; the sequence is MRTLVILAAILLVALQAQA. A propeptide spanning residues 20–66 is cleaved from the precursor; it reads EPLQARTDEATAAQEQIPTDNPEVVVSLAWDESLAPKDSVPGLRKNM. Disulfide bonds link Cys-68–Cys-96, Cys-70–Cys-85, and Cys-75–Cys-95.

The protein belongs to the alpha-defensin family.

The protein resides in the secreted. Probable antibiotic and antifungal activity. This is Neutrophil defensin 8 from Macaca mulatta (Rhesus macaque).